The following is a 1074-amino-acid chain: DNA annealing helicase and endonuclease ZRANB3 (1074 aa).

The Helicase ATP-binding domain maps to 46-208 (TFALRRDGRC…FMQIEALFPQ (163 aa)). The interval 46 to 481 (TFALRRDGRC…GRKEKLQAEE (436 aa)) is DNA annealing helicase activity. 59 to 66 (DEMGLGKT) contacts ATP. The short motif at 157–160 (DESH) is the DEAH box element. Positions 325-481 (AVKDYIKMML…GRKEKLQAEE (157 aa)) constitute a Helicase C-terminal domain. Residues 519–526 (QRDIRSFF) carry the PIP-box motif. S566 bears the Phosphoserine mark. The RanBP2-type zinc-finger motif lies at 617 to 647 (FCGEGWQCAFCTYINNSVLPYCEMCENPRGG). Residues 659–719 (QNKNKNEKDD…RLTPQPGDEQ (61 aa)) are disordered. Composition is skewed to basic and acidic residues over residues 662-674 (NKNEKDDSQDTSK) and 696-711 (AKSKEEISTTESEDRL). Residues 1006 to 1046 (PGEGHFWQVDHIKPVSGGGGQCSLDNLQTLCTVCHRERTAQ) enclose the HNH domain. The tract at residues 1006-1074 (PGEGHFWQVD…SDITRFLVKK (69 aa)) is endonuclease activity. The APIM motif signature appears at 1069–1073 (RFLVK).

Belongs to the SNF2/RAD54 helicase family. In terms of assembly, interacts (via PIP-box and RanBP2-type zinc finger) with PCNA (when PCNA is polyubiquitinated via 'Lys-63'-linked polyubiquitin).

The protein resides in the nucleus. The protein localises to the chromosome. DNA annealing helicase and endonuclease required to maintain genome stability at stalled or collapsed replication forks by facilitating fork restart and limiting inappropriate recombination that could occur during template switching events. Recruited to the sites of stalled DNA replication by polyubiquitinated PCNA and acts as a structure-specific endonuclease that cleaves the replication fork D-loop intermediate, generating an accessible 3'-OH group in the template of the leading strand, which is amenable to extension by DNA polymerase. In addition to endonuclease activity, also catalyzes the fork regression via annealing helicase activity in order to prevent disintegration of the replication fork and the formation of double-strand breaks. The polypeptide is DNA annealing helicase and endonuclease ZRANB3 (ZRANB3) (Bos taurus (Bovine)).